Reading from the N-terminus, the 179-residue chain is Large ribosomal subunit protein uL6 (179 aa).

This sequence belongs to the universal ribosomal protein uL6 family. As to quaternary structure, part of the 50S ribosomal subunit.

Functionally, this protein binds to the 23S rRNA, and is important in its secondary structure. It is located near the subunit interface in the base of the L7/L12 stalk, and near the tRNA binding site of the peptidyltransferase center. The sequence is that of Large ribosomal subunit protein uL6 from Gemmatimonas aurantiaca (strain DSM 14586 / JCM 11422 / NBRC 100505 / T-27).